The sequence spans 149 residues: Large ribosomal subunit protein bL9 (149 aa).

Belongs to the bacterial ribosomal protein bL9 family.

In terms of biological role, binds to the 23S rRNA. This Actinobacillus succinogenes (strain ATCC 55618 / DSM 22257 / CCUG 43843 / 130Z) protein is Large ribosomal subunit protein bL9.